The following is a 125-amino-acid chain: Large ribosomal subunit protein bL12 (125 aa).

It belongs to the bacterial ribosomal protein bL12 family. Homodimer. Part of the ribosomal stalk of the 50S ribosomal subunit. Forms a multimeric L10(L12)X complex, where L10 forms an elongated spine to which 2 to 4 L12 dimers bind in a sequential fashion. Binds GTP-bound translation factors.

Its function is as follows. Forms part of the ribosomal stalk which helps the ribosome interact with GTP-bound translation factors. Is thus essential for accurate translation. The protein is Large ribosomal subunit protein bL12 of Rickettsia prowazekii (strain Madrid E).